A 202-amino-acid chain; its full sequence is Josephin-1 (202 aa).

Ser15 bears the Phosphoserine mark. Residues 23–202 (PPQIYHEKQR…EAHQSWRTDV (180 aa)) enclose the Josephin domain. Cys36 acts as the Nucleophile in catalysis. Catalysis depends on His139, which acts as the Proton acceptor.

In terms of assembly, interacts with beta-actin/ACTB. Post-translationally, monoubiquitinated. Ubiquitination activates deubiquitination activity in vitro.

Its subcellular location is the cell membrane. It localises to the cytoplasm. The enzyme catalyses Thiol-dependent hydrolysis of ester, thioester, amide, peptide and isopeptide bonds formed by the C-terminal Gly of ubiquitin (a 76-residue protein attached to proteins as an intracellular targeting signal).. Deubiquitinates monoubiquitinated probes (in vitro). When ubiquitinated, cleaves 'Lys-63'-linked and 'Lys-48'-linked poly-ubiquitin chains (in vitro), hence may act as a deubiquitinating enzyme. May increase macropinocytosis and suppress clathrin- and caveolae-mediated endocytosis. May enhance membrane dynamics and cell motility independently of its catalytic activity. This is Josephin-1 (JOSD1) from Pongo abelii (Sumatran orangutan).